Reading from the N-terminus, the 251-residue chain is Probable transcriptional regulatory protein RSal33209_2002 (251 aa).

The protein belongs to the TACO1 family.

The protein localises to the cytoplasm. This is Probable transcriptional regulatory protein RSal33209_2002 from Renibacterium salmoninarum (strain ATCC 33209 / DSM 20767 / JCM 11484 / NBRC 15589 / NCIMB 2235).